Here is an 85-residue protein sequence, read N- to C-terminus: Large ribosomal subunit protein bL27 (85 aa).

A disordered region spans residues 1–20 (MAHKKAGGSTRNGRDSEAKR).

The protein belongs to the bacterial ribosomal protein bL27 family.

The polypeptide is Large ribosomal subunit protein bL27 (Enterobacter sp. (strain 638)).